The chain runs to 102 residues: Biotrophy-associated secreted protein 4 (102 aa).

An N-terminal signal peptide occupies residues 1 to 21 (MQLSFSAIAILLAFAVNHATA). An N-linked (GlcNAc...) asparagine glycan is attached at asparagine 36.

The protein resides in the secreted. Its function is as follows. Secreted effector involved in biotrophic colonization of plant cells. Participates in transition from the biotrophic to the necrotrophic phase of Magnaporthe oryzae. Elicits rice basic defense responses during the early stage of interaction and promotes cell death in the late stage of compatible interaction. The sequence is that of Biotrophy-associated secreted protein 4 from Pyricularia oryzae (strain 70-15 / ATCC MYA-4617 / FGSC 8958) (Rice blast fungus).